The following is a 397-amino-acid chain: S-adenosylmethionine synthase (397 aa).

His16 contacts ATP. Residue Asp18 participates in Mg(2+) binding. Glu44 is a K(+) binding site. L-methionine contacts are provided by Glu57 and Gln100. The interval 100–110 (QSPDIAQGVDN) is flexible loop. Residues 175 to 177 (DGK), 242 to 243 (RF), Asp251, 257 to 258 (RK), Ala274, and Lys278 contribute to the ATP site. Residue Asp251 participates in L-methionine binding. Lys282 serves as a coordination point for L-methionine.

This sequence belongs to the AdoMet synthase family. Homotetramer; dimer of dimers. Requires Mg(2+) as cofactor. It depends on K(+) as a cofactor.

It localises to the cytoplasm. The catalysed reaction is L-methionine + ATP + H2O = S-adenosyl-L-methionine + phosphate + diphosphate. Its pathway is amino-acid biosynthesis; S-adenosyl-L-methionine biosynthesis; S-adenosyl-L-methionine from L-methionine: step 1/1. Catalyzes the formation of S-adenosylmethionine (AdoMet) from methionine and ATP. The overall synthetic reaction is composed of two sequential steps, AdoMet formation and the subsequent tripolyphosphate hydrolysis which occurs prior to release of AdoMet from the enzyme. The protein is S-adenosylmethionine synthase of Leifsonia xyli subsp. xyli (strain CTCB07).